The chain runs to 231 residues: ATP phosphoribosyltransferase (231 aa).

Belongs to the ATP phosphoribosyltransferase family. Short subfamily. Heteromultimer composed of HisG and HisZ subunits.

It is found in the cytoplasm. It carries out the reaction 1-(5-phospho-beta-D-ribosyl)-ATP + diphosphate = 5-phospho-alpha-D-ribose 1-diphosphate + ATP. It participates in amino-acid biosynthesis; L-histidine biosynthesis; L-histidine from 5-phospho-alpha-D-ribose 1-diphosphate: step 1/9. In terms of biological role, catalyzes the condensation of ATP and 5-phosphoribose 1-diphosphate to form N'-(5'-phosphoribosyl)-ATP (PR-ATP). Has a crucial role in the pathway because the rate of histidine biosynthesis seems to be controlled primarily by regulation of HisG enzymatic activity. This Rhizobium etli (strain ATCC 51251 / DSM 11541 / JCM 21823 / NBRC 15573 / CFN 42) protein is ATP phosphoribosyltransferase (hisG).